The sequence spans 252 residues: Biosynthetic peptidoglycan transglycosylase (252 aa).

Residues Ile23–Leu43 form a helical membrane-spanning segment.

Belongs to the glycosyltransferase 51 family.

Its subcellular location is the cell inner membrane. It catalyses the reaction [GlcNAc-(1-&gt;4)-Mur2Ac(oyl-L-Ala-gamma-D-Glu-L-Lys-D-Ala-D-Ala)](n)-di-trans,octa-cis-undecaprenyl diphosphate + beta-D-GlcNAc-(1-&gt;4)-Mur2Ac(oyl-L-Ala-gamma-D-Glu-L-Lys-D-Ala-D-Ala)-di-trans,octa-cis-undecaprenyl diphosphate = [GlcNAc-(1-&gt;4)-Mur2Ac(oyl-L-Ala-gamma-D-Glu-L-Lys-D-Ala-D-Ala)](n+1)-di-trans,octa-cis-undecaprenyl diphosphate + di-trans,octa-cis-undecaprenyl diphosphate + H(+). It functions in the pathway cell wall biogenesis; peptidoglycan biosynthesis. Peptidoglycan polymerase that catalyzes glycan chain elongation from lipid-linked precursors. In Cupriavidus pinatubonensis (strain JMP 134 / LMG 1197) (Cupriavidus necator (strain JMP 134)), this protein is Biosynthetic peptidoglycan transglycosylase.